A 250-amino-acid polypeptide reads, in one-letter code: Probable transcriptional regulatory protein SYNPCC7002_A1640 (250 aa).

It belongs to the TACO1 family.

Its subcellular location is the cytoplasm. The chain is Probable transcriptional regulatory protein SYNPCC7002_A1640 from Picosynechococcus sp. (strain ATCC 27264 / PCC 7002 / PR-6) (Agmenellum quadruplicatum).